Consider the following 448-residue polypeptide: UPF0210 protein PAE3581 (448 aa).

Belongs to the UPF0210 family.

The polypeptide is UPF0210 protein PAE3581 (Pyrobaculum aerophilum (strain ATCC 51768 / DSM 7523 / JCM 9630 / CIP 104966 / NBRC 100827 / IM2)).